The sequence spans 202 residues: Sterile alpha motif domain-containing protein 10 (202 aa).

The segment at 1 to 22 (MFTELRSKLSPPRARAGAVRPG) is disordered. An SAM domain is found at 118–184 (WSQQDVCKWL…LQQVLHLQVR (67 aa)).

The sequence is that of Sterile alpha motif domain-containing protein 10 from Mus musculus (Mouse).